A 367-amino-acid polypeptide reads, in one-letter code: HTH-type transcriptional regulator GbdR (367 aa).

Positions 227–325 (QEIVALMEAN…GIPPRDERQG (99 aa)) constitute an HTH araC/xylS-type domain. 2 DNA-binding regions (H-T-H motif) span residues 244-265 (DELA…QKYL) and 292-315 (IIEV…REYF).

Functionally, specific regulator of choline metabolism, which activates transcription of at least 25 genes from 11 promoters in response to choline metabolites. Required for the induction of plcH, encoding the phospholipase C, and pchP, encoding the phosphorylcholine phosphatase, in response to glycine betaine (GB) and dimethylglycine (DMG). Also controls the expression of gbcAB and dgcAB, which are required for GB and DMG degradation, respectively, in response to both GB and DMG. The GbdR regulon also includes genes encoding sarcosine, glycine and serine catabolic enzymes, the BetX and CbcXWV quaternary amine transport proteins and the acetylcholine esterase gene, choE. Acts by binding directly to the promoter region of the genes. May play an important role during P.aeruginosa interactions with eukaryotes. The polypeptide is HTH-type transcriptional regulator GbdR (Pseudomonas aeruginosa (strain UCBPP-PA14)).